A 352-amino-acid polypeptide reads, in one-letter code: Guanine nucleotide-binding protein alpha-7 subunit (352 aa).

The N-myristoyl glycine moiety is linked to residue glycine 2. Cysteine 4 is lipidated: S-palmitoyl cysteine. The G-alpha domain occupies 32-352 (RIIKLLLLGA…AKNLKSMGLC (321 aa)). The segment at 35 to 48 (KLLLLGAGESGKST) is G1 motif. GTP is bound by residues 40–47 (GAGESGKS), 174–180 (LRTRIKT), 199–203 (DVGGQ), 268–271 (NKKD), and alanine 324. Mg(2+) is bound by residues serine 47 and threonine 180. The interval 172–180 (DLLRTRIKT) is G2 motif. The segment at 195 to 204 (FRVIDVGGQR) is G3 motif. The tract at residues 264 to 271 (ILFLNKKD) is G4 motif. A G5 motif region spans residues 322–327 (TCATDT).

This sequence belongs to the G-alpha family. G(i/o/t/z) subfamily. G proteins are composed of 3 units; alpha, beta and gamma. The alpha chain contains the guanine nucleotide binding site.

Functionally, guanine nucleotide-binding proteins (G proteins) are involved as modulators or transducers in various transmembrane signaling systems. This is Guanine nucleotide-binding protein alpha-7 subunit (gpa-7) from Caenorhabditis briggsae.